The chain runs to 442 residues: Coiled-coil domain-containing protein 91 (442 aa).

The interval 1–16 (MDDDDFGGFEAAETFD) is GGA1-binding motif. The segment at 1–27 (MDDDDFGGFEAAETFDGEQGGNQAVSP) is disordered. Phosphoserine is present on residues serine 43 and serine 46. Disordered stretches follow at residues 48–80 (ELILDHDHSSPSTGHLPPDAVISSADDTHADSS) and 114–134 (HGALALEDEPEGPGVHVSNSQ). 3 coiled-coil regions span residues 130–210 (VSNS…GHEA), 253–318 (HAQH…MKDV), and 346–408 (ARDQ…RRLD). A homodimerization region spans residues 211–414 (LSIIVDEYKA…RRLDQVTRQR (204 aa)).

Homodimer. Interacts with GGA1, GGA2 and AP1G1.

Its subcellular location is the membrane. It is found in the golgi apparatus. The protein resides in the trans-Golgi network membrane. The protein localises to the trans-Golgi network. Functionally, involved in the regulation of membrane traffic through the trans-Golgi network (TGN). Functions in close cooperation with the GGAs in the sorting of hydrolases to lysosomes. The chain is Coiled-coil domain-containing protein 91 (Ccdc91) from Mus musculus (Mouse).